Reading from the N-terminus, the 465-residue chain is Cysteine--tRNA ligase (465 aa).

Cysteine 29 contributes to the Zn(2+) binding site. The 'HIGH' region signature appears at 31-41 (PTVYNYIHIGN). Zn(2+) is bound by residues cysteine 209, histidine 234, and glutamate 238. The short motif at 266 to 270 (KMSKS) is the 'KMSKS' region element. Lysine 269 provides a ligand contact to ATP. A Phosphoserine modification is found at serine 270.

Belongs to the class-I aminoacyl-tRNA synthetase family. Monomer. The cofactor is Zn(2+).

It is found in the cytoplasm. It catalyses the reaction tRNA(Cys) + L-cysteine + ATP = L-cysteinyl-tRNA(Cys) + AMP + diphosphate. The polypeptide is Cysteine--tRNA ligase (Anoxybacillus flavithermus (strain DSM 21510 / WK1)).